The following is a 250-amino-acid chain: 4-hydroxy-tetrahydrodipicolinate reductase (250 aa).

Residues 10–15, 78–80, and 105–108 contribute to the NAD(+) site; these read GARGRI, GTT, and APNF. H135 functions as the Proton donor/acceptor in the catalytic mechanism. H136 provides a ligand contact to (S)-2,3,4,5-tetrahydrodipicolinate. The active-site Proton donor is the K139. Residue 145–146 participates in (S)-2,3,4,5-tetrahydrodipicolinate binding; it reads GT. Residues 158–177 are disordered; sequence RAEAGSAPQPDATTTALDGA.

The protein belongs to the DapB family.

The protein localises to the cytoplasm. The enzyme catalyses (S)-2,3,4,5-tetrahydrodipicolinate + NAD(+) + H2O = (2S,4S)-4-hydroxy-2,3,4,5-tetrahydrodipicolinate + NADH + H(+). The catalysed reaction is (S)-2,3,4,5-tetrahydrodipicolinate + NADP(+) + H2O = (2S,4S)-4-hydroxy-2,3,4,5-tetrahydrodipicolinate + NADPH + H(+). The protein operates within amino-acid biosynthesis; L-lysine biosynthesis via DAP pathway; (S)-tetrahydrodipicolinate from L-aspartate: step 4/4. In terms of biological role, catalyzes the conversion of 4-hydroxy-tetrahydrodipicolinate (HTPA) to tetrahydrodipicolinate. This Streptomyces griseus subsp. griseus (strain JCM 4626 / CBS 651.72 / NBRC 13350 / KCC S-0626 / ISP 5235) protein is 4-hydroxy-tetrahydrodipicolinate reductase.